Consider the following 387-residue polypeptide: Succinyl-diaminopimelate desuccinylase (387 aa).

A Zn(2+)-binding site is contributed by histidine 74. The active site involves aspartate 76. Residue aspartate 107 coordinates Zn(2+). The active-site Proton acceptor is glutamate 142. Zn(2+)-binding residues include glutamate 143, glutamate 171, and histidine 360.

The protein belongs to the peptidase M20A family. DapE subfamily. Homodimer. Zn(2+) is required as a cofactor. The cofactor is Co(2+).

The catalysed reaction is N-succinyl-(2S,6S)-2,6-diaminopimelate + H2O = (2S,6S)-2,6-diaminopimelate + succinate. It participates in amino-acid biosynthesis; L-lysine biosynthesis via DAP pathway; LL-2,6-diaminopimelate from (S)-tetrahydrodipicolinate (succinylase route): step 3/3. In terms of biological role, catalyzes the hydrolysis of N-succinyl-L,L-diaminopimelic acid (SDAP), forming succinate and LL-2,6-diaminopimelate (DAP), an intermediate involved in the bacterial biosynthesis of lysine and meso-diaminopimelic acid, an essential component of bacterial cell walls. The sequence is that of Succinyl-diaminopimelate desuccinylase from Rhodopseudomonas palustris (strain ATCC BAA-98 / CGA009).